Reading from the N-terminus, the 184-residue chain is MMSQPAKVLLLYAHPESQDSVANRVLLKPATQLSNVTAHDLYAHYPDFFIDIPREQALLREHEVIVFQRPLYTYSCPALLKEWLDRVLSRGFASGPGGNQLAGKYWRSVITTGEPESAYRYDALNRYPMSDVLRPFELAAGMCRMHWLSPIIIYWARRQSAQELASHARAYGDWLANPLSPGGR.

Belongs to the NAD(P)H dehydrogenase (quinone) family. KefG subfamily. In terms of assembly, interacts with KefB.

The protein localises to the cell inner membrane. It carries out the reaction a quinone + NADH + H(+) = a quinol + NAD(+). The enzyme catalyses a quinone + NADPH + H(+) = a quinol + NADP(+). Regulatory subunit of a potassium efflux system that confers protection against electrophiles. Required for full activity of KefB. The chain is Glutathione-regulated potassium-efflux system ancillary protein KefG from Shigella dysenteriae serotype 1 (strain Sd197).